Reading from the N-terminus, the 118-residue chain is Basic phospholipase A2 nigroxin B (118 aa).

7 cysteine pairs are disulfide-bonded: cysteine 11/cysteine 70, cysteine 25/cysteine 117, cysteine 27/cysteine 43, cysteine 42/cysteine 98, cysteine 49/cysteine 91, cysteine 59/cysteine 84, and cysteine 77/cysteine 89. Ca(2+) contacts are provided by tyrosine 26, glycine 28, and glycine 30. Histidine 46 is an active-site residue. Position 47 (aspartate 47) interacts with Ca(2+). Aspartate 92 is an active-site residue.

This sequence belongs to the phospholipase A2 family. Group I subfamily. D49 sub-subfamily. Ca(2+) serves as cofactor. As to expression, expressed by the venom gland.

The protein localises to the secreted. It catalyses the reaction a 1,2-diacyl-sn-glycero-3-phosphocholine + H2O = a 1-acyl-sn-glycero-3-phosphocholine + a fatty acid + H(+). In terms of biological role, snake venom phospholipase A2 (PLA2) that has only a weak enzymatic activity. It has a myotoxic activity in vivo (dystrophic effect). PLA2 catalyzes the calcium-dependent hydrolysis of the 2-acyl groups in 3-sn-phosphoglycerides. The sequence is that of Basic phospholipase A2 nigroxin B from Micrurus nigrocinctus (Central American coral snake).